The chain runs to 261 residues: Carnitinyl-CoA dehydratase (261 aa).

Glutamate 111 (nucleophile) is an active-site residue. The active-site Proton acceptor is glutamate 131.

Belongs to the enoyl-CoA hydratase/isomerase family.

It catalyses the reaction (R)-carnitinyl-CoA = crotonobetainyl-CoA + H2O. It functions in the pathway amine and polyamine metabolism; carnitine metabolism. In terms of biological role, catalyzes the reversible dehydration of L-carnitinyl-CoA to crotonobetainyl-CoA. The chain is Carnitinyl-CoA dehydratase from Escherichia coli O157:H7.